Here is a 361-residue protein sequence, read N- to C-terminus: dTDP-glucose 4,6-dehydratase (361 aa).

Residues 11–12 (FI), 32–35 (DKLT), 58–59 (DI), 80–84 (LAAES), and Thr99 contribute to the NAD(+) site. Ser84 lines the substrate pocket. Position 133 (Thr133) interacts with substrate. Catalysis depends on Asp134, which acts as the Proton donor. Residues Glu135 and Tyr167 each act as proton acceptor in the active site. 167 to 171 (YSASK) contributes to the NAD(+) binding site. Residue Asn196 participates in substrate binding. Asn197 serves as a coordination point for NAD(+). Residues 206–207 (KL), 222–224 (PIY), Arg231, Asn266, and 296–300 (DRPGH) contribute to the substrate site.

Belongs to the NAD(P)-dependent epimerase/dehydratase family. dTDP-glucose dehydratase subfamily. Homodimer. NAD(+) serves as cofactor.

The catalysed reaction is dTDP-alpha-D-glucose = dTDP-4-dehydro-6-deoxy-alpha-D-glucose + H2O. It participates in carbohydrate biosynthesis; dTDP-L-rhamnose biosynthesis. The protein operates within bacterial outer membrane biogenesis; LPS O-antigen biosynthesis. Functionally, catalyzes the dehydration of dTDP-D-glucose to form dTDP-6-deoxy-D-xylo-4-hexulose via a three-step process involving oxidation, dehydration and reduction. This Escherichia coli protein is dTDP-glucose 4,6-dehydratase (rfbB).